Here is a 109-residue protein sequence, read N- to C-terminus: UPF0060 membrane protein PSPA7_1846 (109 aa).

The next 4 helical transmembrane spans lie at 5–25, 27–47, 59–79, and 84–104; these read LWFV…YLWL, LGKS…FALL, AYAA…AFVE, and LWSD…VLFG.

This sequence belongs to the UPF0060 family.

It is found in the cell inner membrane. This chain is UPF0060 membrane protein PSPA7_1846, found in Pseudomonas paraeruginosa (strain DSM 24068 / PA7) (Pseudomonas aeruginosa (strain PA7)).